The primary structure comprises 1288 residues: 5-oxoprolinase (1288 aa).

The residue at position 151 (threonine 151) is a Phosphothreonine. The interval 1249 to 1269 (GGGGYGDPEDPAPLPGSPLQP) is disordered. Serine 1265 bears the Phosphoserine mark.

Belongs to the oxoprolinase family. As to quaternary structure, homodimer. As to expression, expressed in coronary artery and kidney.

The protein resides in the cytoplasm. It is found in the cytosol. The catalysed reaction is 5-oxo-L-proline + ATP + 2 H2O = L-glutamate + ADP + phosphate + H(+). Its function is as follows. Catalyzes the cleavage of 5-oxo-L-proline to form L-glutamate coupled to the hydrolysis of ATP to ADP and inorganic phosphate. This chain is 5-oxoprolinase (OPLAH), found in Bos taurus (Bovine).